The chain runs to 221 residues: MVRLVPRAFAATVALLAAGFSPATASADPVLVFPGMEIRQDNHVCTLGYVDPALKIAFTAGHCRGGGAVTSRDYKVIGHLRAIRDNTPSGSTVATHELIADYEAIVLADDVTASNILPSGRALESRPGVVLHPGQAVCHFGVSTGETCGTVESVNNGWFTMSHGVLSEKGDSGGPVYLAPDGGPAQIVGIFNSVWGGFPAAVSWRSTSEQVHADLGVTPLA.

An N-terminal signal peptide occupies residues 1 to 26 (MVRLVPRAFAATVALLAAGFSPATAS).

This is an uncharacterized protein from Mycobacterium tuberculosis (strain ATCC 25618 / H37Rv).